A 651-amino-acid chain; its full sequence is Probable potassium transport system protein Kup (651 aa).

12 helical membrane-spanning segments follow: residues L41–F61, V82–V102, L130–P150, I163–L183, V194–L214, F235–T255, W276–L296, M309–A329, I366–F386, A395–M415, A426–I446, and E450–V470.

This sequence belongs to the HAK/KUP transporter (TC 2.A.72) family.

The protein localises to the cell inner membrane. It catalyses the reaction K(+)(in) + H(+)(in) = K(+)(out) + H(+)(out). Transport of potassium into the cell. Likely operates as a K(+):H(+) symporter. In Brucella anthropi (strain ATCC 49188 / DSM 6882 / CCUG 24695 / JCM 21032 / LMG 3331 / NBRC 15819 / NCTC 12168 / Alc 37) (Ochrobactrum anthropi), this protein is Probable potassium transport system protein Kup.